The sequence spans 487 residues: ESCRT-I complex subunit vps23 (487 aa).

The SB domain maps to 428 to 487 (SERELKYYELKRKDEKLDEGIRALNQALHHESIMPASWLKGIKLLARQQFLIRDEMLQYS).

As to quaternary structure, component of the ESCRT-I complex (endosomal sorting complex required for transport I).

Its subcellular location is the cytoplasm. It localises to the endosome. The protein resides in the late endosome membrane. Component of the ESCRT-I complex, a regulator of vesicular trafficking process. Binds to ubiquitinated cargo proteins and is required for the sorting of endocytic ubiquitinated cargos into multivesicular bodies (MVBs). Mediates the association to the ESCRT-0 complex. In Schizosaccharomyces pombe (strain 972 / ATCC 24843) (Fission yeast), this protein is ESCRT-I complex subunit vps23 (sst6).